The following is a 425-amino-acid chain: Dihydroorotase (425 aa).

Zn(2+) is bound by residues His-56 and His-58. Residues His-58 to Arg-60 and Asn-90 contribute to the substrate site. Zn(2+)-binding residues include Asp-148, His-175, and His-228. Asn-274 is a substrate binding site. Zn(2+) is bound at residue Asp-301. Asp-301 is an active-site residue. Substrate is bound by residues His-305 and Phe-319–Gly-320.

This sequence belongs to the metallo-dependent hydrolases superfamily. DHOase family. Class I DHOase subfamily. Requires Zn(2+) as cofactor.

It catalyses the reaction (S)-dihydroorotate + H2O = N-carbamoyl-L-aspartate + H(+). The protein operates within pyrimidine metabolism; UMP biosynthesis via de novo pathway; (S)-dihydroorotate from bicarbonate: step 3/3. Functionally, catalyzes the reversible cyclization of carbamoyl aspartate to dihydroorotate. This is Dihydroorotase from Lactobacillus acidophilus (strain ATCC 700396 / NCK56 / N2 / NCFM).